Reading from the N-terminus, the 137-residue chain is MGWVIPEWPGAQSCPTAAQVAQPVPFMCNAPASPINDKEKDKAGGRLPSGSEPRARAFCEAGADGEQGDPSPADTIKANQGHIPAAPGETGSVICWCDQSVAPPRPAGLSVSGRQSYLVGCFRWVLTFFFSVFYLTP.

Positions 31–83 are disordered; sequence PASPINDKEKDKAGGRLPSGSEPRARAFCEAGADGEQGDPSPADTIKANQGHI.

This is an uncharacterized protein from Homo sapiens (Human).